A 559-amino-acid polypeptide reads, in one-letter code: POU domain protein 1 (559 aa).

Residues 259–333 enclose the POU-specific domain; sequence EDLPSSDDLE…LLQKWLHEAD (75 aa). Residues 351-410 constitute a DNA-binding region (homeobox); that stretch reads KRKKRTSIEANVKSILESSFMKLSKPSAQDISSLAEKLSLEKEVVRVWFCNRRQKEKRIT.

This sequence belongs to the POU transcription factor family.

The protein resides in the nucleus. In Dugesia japonica (Planarian), this protein is POU domain protein 1 (POU1).